The following is a 375-amino-acid chain: Esterase AN6793 (375 aa).

The interval 138 to 158 (RHPQPGLDPGHGHRHKRMPPL) is disordered.

It belongs to the sidJ hydrolase family. Homodimer.

It participates in secondary metabolite biosynthesis. Esterase; part of a cluster that mediates the biosynthesis of a yet undetermined secondary metabolite. With the HR-PKS AN6791, produces a pathway intermediate compound with molecular weight 258. The protein is Esterase AN6793 of Emericella nidulans (strain FGSC A4 / ATCC 38163 / CBS 112.46 / NRRL 194 / M139) (Aspergillus nidulans).